A 159-amino-acid chain; its full sequence is Eukaryotic translation initiation factor 5A (159 aa).

The residue at position 55 (K55) is a Hypusine.

This sequence belongs to the eIF-5A family. Post-translationally, lys-55 undergoes hypusination, a unique post-translational modification that consists in the addition of a butylamino group from spermidine to lysine side chain, leading to the formation of the unusual amino acid hypusine. eIF-5As are the only known proteins to undergo this modification, which is essential for their function.

It localises to the cytoplasm. Functionally, translation factor that promotes translation elongation and termination, particularly upon ribosome stalling at specific amino acid sequence contexts. Binds between the exit (E) and peptidyl (P) site of the ribosome and promotes rescue of stalled ribosome: specifically required for efficient translation of polyproline-containing peptides as well as other motifs that stall the ribosome. Acts as a ribosome quality control (RQC) cofactor by joining the RQC complex to facilitate peptidyl transfer during CAT tailing step. This is Eukaryotic translation initiation factor 5A (eif5a) from Dictyostelium discoideum (Social amoeba).